The chain runs to 62 residues: Conotoxin Gm5.2 (62 aa).

An N-terminal signal peptide occupies residues 1–22 (MRCLPVFVILLLLIASAPSVDA). Positions 23 to 49 (QPKTKDDVPLAPLHDNIRSTLQTLRKK) are excised as a propeptide. Ser60 carries the serine amide modification.

This sequence belongs to the conotoxin T superfamily. In terms of processing, contains 2 disulfide bonds that can be either 'C1-C3, C2-C4' or 'C1-C4, C2-C3', since these disulfide connectivities have been observed for conotoxins with cysteine framework V (for examples, see AC P0DQQ7 and AC P81755). In terms of tissue distribution, expressed by the venom duct.

The protein localises to the secreted. The chain is Conotoxin Gm5.2 from Conus gloriamaris (Glory-of-the-Sea cone).